Reading from the N-terminus, the 24-residue chain is Humanin-like 13 (24 aa).

The protein belongs to the humanin family.

The protein resides in the secreted. It localises to the cytoplasm. Its function is as follows. Plays a role as a neuroprotective and antiapoptotic factor. This Homo sapiens (Human) protein is Humanin-like 13.